Consider the following 291-residue polypeptide: MAPANLPSIFNATSQDIEQLLAAQCHIGSKNLGVHAQPYLWKTRADGVNIINIGKTWEKIVLAARIIAAIDNPSDVCVISARPYGQRAVLKFAAHTGAQAIAGRFTPGSFTNYITRSFKEPRLIVVTDPRTDAQAIKEASYVNIPVIALCDTDSPTEYVDVAIPTNNKGRHSIGLVWWMLAREVLRLRGTIYNREAPWDVMVDLYFYRDPEAEAEEKVEEEKLPGVDEEGVAAIESGFPAAGGDWEAAPAAFPAAGAATGEWSEAQGAQWETGTGAPAADWAAEPAKESSW.

The disordered stretch occupies residues 255–291 (AGAATGEWSEAQGAQWETGTGAPAADWAAEPAKESSW).

This sequence belongs to the universal ribosomal protein uS2 family. Component of the small ribosomal subunit. Mature ribosomes consist of a small (40S) and a large (60S) subunit. The 40S subunit contains about 33 different proteins and 1 molecule of RNA (18S). The 60S subunit contains about 49 different proteins and 3 molecules of RNA (25S, 5.8S and 5S). Interacts with RPS21.

It localises to the cytoplasm. Functionally, required for the assembly and/or stability of the 40S ribosomal subunit. Required for the processing of the 20S rRNA-precursor to mature 18S rRNA in a late step of the maturation of 40S ribosomal subunits. The sequence is that of Small ribosomal subunit protein uS2 from Podospora anserina (strain S / ATCC MYA-4624 / DSM 980 / FGSC 10383) (Pleurage anserina).